The sequence spans 411 residues: Multidrug resistance protein MdtA (411 aa).

An N-terminal signal peptide occupies residues 1–26 (MNNNKKTKKRFSLIIILLIVIAGAIA). The span at 35 to 55 (SAPPVSKDTPTANTPNRSTAG) shows a compositional bias: polar residues. The segment at 35–64 (SAPPVSKDTPTANTPNRSTAGSRRPPMPPV) is disordered.

This sequence belongs to the membrane fusion protein (MFP) (TC 8.A.1) family. In terms of assembly, part of a tripartite efflux system composed of MdtA, MdtB and MdtC.

It localises to the cell inner membrane. This Proteus mirabilis (strain HI4320) protein is Multidrug resistance protein MdtA.